Reading from the N-terminus, the 510-residue chain is Beta-galactosidase (510 aa).

Glutamate 210 (proton donor) is an active-site residue. The active-site Nucleophile is the glutamate 414.

This sequence belongs to the glycosyl hydrolase 1 family.

It carries out the reaction Hydrolysis of terminal non-reducing beta-D-galactose residues in beta-D-galactosides.. The protein is Beta-galactosidase of Pyrococcus woesei.